Here is a 714-residue protein sequence, read N- to C-terminus: MHQQAATSSRCQGWSPRYQGWSPRFQGWSPRFHGWNPRFRGWNPHCRGWSPCFQGWSPRCQTFPPKINRISSNYPTCDGQEQPAYFTDNFCKPCGVVLQHESERISHFESEIHAQNVKFFFQMHGEQSEVPGRKVNMHAGNSQVCSSGEVNRNNFTDLHNMSFDSLAAAPSHYVGKSHSPTQNQSLEEHDQVSPSTCSPKMDEPNTTPAPPPFLKSVIVKPPPAYRMRTYVCHICSITFTSLHMFRSHMQGTEHQIKRAQHLWTHWQCTQLLESHVINQVKNSKKMQESCQAECGDDIKMKKSRELEPKGHFREMEDNYMEAQAHEYREMVDSRPRHKMLEQTLPLENFWAHPGPYNDSRALEEQLPHNLPAESKTYDSFQDELEDYIKGQKARGLDPNTSFRRMSESYRYRDQRYRERVDSEHRQRPCEERFSFEAPQTYQQEYSASPVEGQSPHWLPSHSKRRNDDFQNEFDDYNKVQESRESEPKTSFRRMDSSFETHNYEEMVDRRSSHTMFEEGLPCETFQTYTDPYSSAQAVENTLPHCLPAYENQPSLDAESHYQLTTEEFSEMPASLSLSQQEDNPSSYNVDYDIYKHLPSNDNASAHETSHRRRRQKRKRHLEEGKERPEKEQSKHKRKRSYQDKDLDKDKLIKQSKREEDKAGVSSEKTKHRRKKRKHETSSEKEERKHKKEKKKSVEERTEEEILWDESILGF.

The Matrin-type 1 zinc finger occupies 89–119; the sequence is NFCKPCGVVLQHESERISHFESEIHAQNVKF. The segment at 172–214 is disordered; that stretch reads HYVGKSHSPTQNQSLEEHDQVSPSTCSPKMDEPNTTPAPPPFL. The Matrin-type 2 zinc-finger motif lies at 230–254; the sequence is YVCHICSITFTSLHMFRSHMQGTEH. The segment covering 417–434 has biased composition (basic and acidic residues); that stretch reads RERVDSEHRQRPCEERFS. Disordered regions lie at residues 417–469 and 571–714; these read RERV…NDDF and MPAS…ILGF. 2 stretches are compositionally biased toward polar residues: residues 437-446 and 575-588; these read APQTYQQEYS and LSLSQQEDNPSSYN. Basic residues predominate over residues 609–619; that stretch reads SHRRRRQKRKR. Basic and acidic residues-rich tracts occupy residues 620–632 and 640–662; these read HLEEGKERPEKEQ and SYQDKDLDKDKLIKQSKREEDKA. Over residues 669-678 the composition is skewed to basic residues; the sequence is TKHRRKKRKH.

The protein localises to the nucleus. The protein is Zinc finger matrin-type protein 1 (Zmat1) of Mus musculus (Mouse).